A 395-amino-acid polypeptide reads, in one-letter code: 1-deoxy-D-xylulose 5-phosphate reductoisomerase (395 aa).

Residues Thr10, Gly11, Ser12, Ile13, Lys37, and Asn123 each contribute to the NADPH site. Lys124 lines the 1-deoxy-D-xylulose 5-phosphate pocket. NADPH is bound at residue Glu125. Asp149 is a Mn(2+) binding site. Residues Ser150, Glu151, Ser185, and His208 each coordinate 1-deoxy-D-xylulose 5-phosphate. Mn(2+) is bound at residue Glu151. Gly214 contacts NADPH. 1-deoxy-D-xylulose 5-phosphate contacts are provided by Ser221, Asn226, Lys227, and Glu230. A Mn(2+)-binding site is contributed by Glu230.

The protein belongs to the DXR family. Requires Mg(2+) as cofactor. Mn(2+) serves as cofactor.

The catalysed reaction is 2-C-methyl-D-erythritol 4-phosphate + NADP(+) = 1-deoxy-D-xylulose 5-phosphate + NADPH + H(+). It participates in isoprenoid biosynthesis; isopentenyl diphosphate biosynthesis via DXP pathway; isopentenyl diphosphate from 1-deoxy-D-xylulose 5-phosphate: step 1/6. Catalyzes the NADPH-dependent rearrangement and reduction of 1-deoxy-D-xylulose-5-phosphate (DXP) to 2-C-methyl-D-erythritol 4-phosphate (MEP). This chain is 1-deoxy-D-xylulose 5-phosphate reductoisomerase, found in Shewanella loihica (strain ATCC BAA-1088 / PV-4).